The sequence spans 745 residues: F-box only protein 30 (745 aa).

The TRAF-type zinc finger occupies 48-109 (EHRLLCPFER…SYADRKSYEN (62 aa)). 2 disordered regions span residues 211 to 231 (NTSVPNDMDEQQNARESLEDQ) and 305 to 324 (GDSKQSNLTNGDCVASSDGT). Positions 222–231 (QNARESLEDQ) are enriched in basic and acidic residues. The span at 305–314 (GDSKQSNLTN) shows a compositional bias: polar residues. Residues 610–658 (NDHLSSLPFEVLQHIAGFLDGFSLCQLSCVSKLMRDVCGSLLQSRGMVI) form the F-box domain.

As to quaternary structure, part of a SCF (SKP1-cullin-F-box) protein ligase complex. Interacts with SKP1, CUL1 and RBX1/ROC1. Post-translationally, auto-ubiquitinated. In terms of processing, may be neddylated. Neddylation may be required for E3 ligase activity.

It participates in protein modification; protein ubiquitination. Its function is as follows. Substrate-recognition component of the SCF (SKP1-CUL1-F-box protein)-type E3 ubiquitin ligase complex. Required for muscle atrophy following denervation. This is F-box only protein 30 (FBXO30) from Homo sapiens (Human).